The sequence spans 283 residues: uncharacterized protein (283 aa).

3 Solcar repeats span residues 14-95 (QPVW…LKHL), 102-185 (NDHA…SEAV), and 190-274 (GLAL…TLQG). 6 consecutive transmembrane segments (helical) span residues 20 to 40 (TLAG…FDVI), 70 to 90 (GNVV…VAFS), 105 to 125 (AVNF…SYPL), 157 to 177 (FFPG…CFFM), 184 to 204 (AVLS…IAGA), and 249 to 266 (GLSV…ITML).

The protein belongs to the mitochondrial carrier (TC 2.A.29) family.

The protein localises to the mitochondrion inner membrane. This is an uncharacterized protein from Schizosaccharomyces pombe (strain 972 / ATCC 24843) (Fission yeast).